The chain runs to 374 residues: Tuliposide A-converting enzyme b3, amyloplastic (374 aa).

The transit peptide at 1–68 directs the protein to the amyloplast; sequence MSAALFCGPP…TNSSLSPSPT (68 aa). Ser226 functions as the Acyl-ester intermediate in the catalytic mechanism. Active-site charge relay system residues include Asp316 and His348.

Belongs to the AB hydrolase superfamily. In terms of assembly, homodimer. In terms of tissue distribution, highly expressed in pistil and bulb scales. Lower expression in stem, and barely detected in root, leaf, petal and stamen.

The protein localises to the plastid. It is found in the amyloplast. The catalysed reaction is 6-tuliposide A = tulipalin A + D-glucose. Lactone-forming carboxylesterases, specifically catalyzing intramolecular transesterification, but not hydrolysis. Involved in the biosynthesis of tulipalins, defensive chemicals that show antimicrobial activities against a broad range of strains of bacteria and fungi. Substrates are 6-tuliposide A &gt; 6-tuliposide B. The protein is Tuliposide A-converting enzyme b3, amyloplastic (TCEA-B3) of Tulipa gesneriana (Garden tulip).